Reading from the N-terminus, the 27-residue chain is Phospholipase A2 taicatoxin (27 aa).

Belongs to the phospholipase A2 family. Group I subfamily. In terms of assembly, heterotrimer composed of an alpha-neurotoxin-like peptide of 8 kDa (AC P0CJ35), this neurotoxic phospholipase of 16 kDa and a serine protease inhibitor of 7 kDa (AC B7S4N9) at an approximate stoichiometry of 1:1:4; non-covalently linked. Ca(2+) is required as a cofactor. Contains 7 disulfide bonds. Expressed by the venom gland.

It is found in the secreted. It carries out the reaction a 1,2-diacyl-sn-glycero-3-phosphocholine + H2O = a 1-acyl-sn-glycero-3-phosphocholine + a fatty acid + H(+). In terms of biological role, heterotrimer: blocks the voltage-dependent L-type calcium channels from the heart, and the small conductance calcium-activated potassium channels in the chromaffin cells and in the brain. Is very toxic to mice. Its function is as follows. Monomer: Snake venom phospholipase A2 (PLA2) that has neurotoxic activities. Voltage-dependently affects ionic currents in chick (Gallus domesticus) dorsal root ganglion cells. PLA2 catalyzes the calcium-dependent hydrolysis of the 2-acyl groups in 3-sn-phosphoglycerides. In Oxyuranus scutellatus scutellatus (Australian taipan), this protein is Phospholipase A2 taicatoxin.